We begin with the raw amino-acid sequence, 186 residues long: dCTP deaminase (186 aa).

107–112 (KSTYAR) contributes to the dCTP binding site. Glu-133 functions as the Proton donor/acceptor in the catalytic mechanism. Residues Gln-152, Tyr-166, and Gln-176 each contribute to the dCTP site.

Belongs to the dCTP deaminase family. Homotrimer.

The catalysed reaction is dCTP + H2O + H(+) = dUTP + NH4(+). Its pathway is pyrimidine metabolism; dUMP biosynthesis; dUMP from dCTP (dUTP route): step 1/2. Functionally, catalyzes the deamination of dCTP to dUTP. The chain is dCTP deaminase from Campylobacter jejuni subsp. jejuni serotype O:6 (strain 81116 / NCTC 11828).